Consider the following 195-residue polypeptide: COMM domain-containing protein 3 (195 aa).

A COMM domain is found at His124 to Thr193.

Belongs to the COMM domain-containing protein 3 family. As to quaternary structure, component of the commander complex consisting of the CCC subcomplex and the retriever subcomplex. Component of the CCC (COMMD/CCDC22/CCDC93) subcomplex consisting of COMMD1, COMMD2, COMMD3, COMMD4, COMMD5, COMMD6, COMMD7, COMMD8, COMMD9, COMMD10, CCDC22 and CCDC93; within the complex forms a heterodimer with COMMD2. Interacts with NFKB1/p105. Interacts with CCDC22, CCDC93, SCNN1B, CUL3, CUL4A, CUL4B, CUL5. In terms of tissue distribution, expressed in kidney collecting duct cells and in the nuclei of proximal convoluted tubule cells in the kidney cortex (at protein level).

Its subcellular location is the cytoplasm. It localises to the nucleus. Scaffold protein in the commander complex that is essential for endosomal recycling of transmembrane cargos; the commander complex is composed of the CCC subcomplex and the retriever subcomplex. May modulate activity of cullin-RING E3 ubiquitin ligase (CRL) complexes. May down-regulate activation of NF-kappa-B. Modulates Na(+) transport in epithelial cells by regulation of apical cell surface expression of amiloride-sensitive sodium channel (ENaC) subunits. The protein is COMM domain-containing protein 3 (Commd3) of Rattus norvegicus (Rat).